The primary structure comprises 141 residues: Nucleoside triphosphatase NudI (141 aa).

The region spanning M1 to L141 is the Nudix hydrolase domain. The Nudix box motif lies at G38 to G59.

It belongs to the Nudix hydrolase family. NudI subfamily. Monomer. The cofactor is Mg(2+).

The enzyme catalyses a ribonucleoside 5'-triphosphate + H2O = a ribonucleoside 5'-phosphate + diphosphate + H(+). The catalysed reaction is a 2'-deoxyribonucleoside 5'-triphosphate + H2O = a 2'-deoxyribonucleoside 5'-phosphate + diphosphate + H(+). It catalyses the reaction dUTP + H2O = dUMP + diphosphate + H(+). It carries out the reaction dTTP + H2O = dTMP + diphosphate + H(+). The enzyme catalyses dCTP + H2O = dCMP + diphosphate + H(+). Its function is as follows. Catalyzes the hydrolysis of nucleoside triphosphates, with a preference for pyrimidine deoxynucleoside triphosphates (dUTP, dTTP and dCTP). The polypeptide is Nucleoside triphosphatase NudI (Salmonella schwarzengrund (strain CVM19633)).